A 403-amino-acid polypeptide reads, in one-letter code: Soluble calcium-activated nucleotidase 1 (403 aa).

The Cytoplasmic portion of the chain corresponds to 1-44; sequence MPIQPFDQREWNEPMHSLRISVGGLPVLASMTKATDPRFRPRWR. A helical; Signal-anchor for type II membrane protein membrane pass occupies residues 45 to 61; that stretch reads VILTSFVGAALLWLLYS. Residues 62–403 are Lumenal-facing; the sequence is HHQGPVPGRP…TVKYEGIEFI (342 aa). Residue Asn90 is glycosylated (N-linked (GlcNAc...) asparagine). Ca(2+)-binding residues include Ser170, Asp171, Glu217, Glu286, Ser347, and Glu398.

The protein belongs to the apyrase family. As to quaternary structure, monomer. Homodimer; dimerization is Ca(2+)-dependent. Ca(2+) is required as a cofactor.

It localises to the endoplasmic reticulum membrane. It is found in the golgi apparatus. Its subcellular location is the golgi stack membrane. The catalysed reaction is a ribonucleoside 5'-diphosphate + H2O = a ribonucleoside 5'-phosphate + phosphate + H(+). Calcium-dependent nucleotidase with a preference for UDP. The order of activity with different substrates is UDP &gt; GDP &gt; IDP &gt;&gt; UTP &gt; CDP = GTP = ITP. Has very low activity towards ADP and even lower activity towards ATP. Does not hydrolyze AMP and GMP. Involved in proteoglycan synthesis. The polypeptide is Soluble calcium-activated nucleotidase 1 (Cant1) (Mus musculus (Mouse)).